A 488-amino-acid polypeptide reads, in one-letter code: Glutamate--tRNA ligase (488 aa).

The short motif at 8 to 18 (PSPTGPLHIGG) is the 'HIGH' region element. Zn(2+)-binding residues include cysteine 105, cysteine 107, cysteine 132, and histidine 134. The 'KMSKS' region motif lies at 249–253 (KMSKR). Lysine 252 provides a ligand contact to ATP.

It belongs to the class-I aminoacyl-tRNA synthetase family. Glutamate--tRNA ligase type 1 subfamily. As to quaternary structure, monomer. The cofactor is Zn(2+).

It localises to the cytoplasm. The catalysed reaction is tRNA(Glu) + L-glutamate + ATP = L-glutamyl-tRNA(Glu) + AMP + diphosphate. Catalyzes the attachment of glutamate to tRNA(Glu) in a two-step reaction: glutamate is first activated by ATP to form Glu-AMP and then transferred to the acceptor end of tRNA(Glu). The chain is Glutamate--tRNA ligase from Desulfitobacterium hafniense (strain Y51).